The primary structure comprises 287 residues: Phosphatidylserine decarboxylase proenzyme (287 aa).

Catalysis depends on charge relay system; for autoendoproteolytic cleavage activity residues Asp86, His143, and Ser250. Residue Ser250 is the Schiff-base intermediate with substrate; via pyruvic acid; for decarboxylase activity of the active site. The residue at position 250 (Ser250) is a Pyruvic acid (Ser); by autocatalysis.

Belongs to the phosphatidylserine decarboxylase family. PSD-B subfamily. Prokaryotic type I sub-subfamily. As to quaternary structure, heterodimer of a large membrane-associated beta subunit and a small pyruvoyl-containing alpha subunit. It depends on pyruvate as a cofactor. Is synthesized initially as an inactive proenzyme. Formation of the active enzyme involves a self-maturation process in which the active site pyruvoyl group is generated from an internal serine residue via an autocatalytic post-translational modification. Two non-identical subunits are generated from the proenzyme in this reaction, and the pyruvate is formed at the N-terminus of the alpha chain, which is derived from the carboxyl end of the proenzyme. The autoendoproteolytic cleavage occurs by a canonical serine protease mechanism, in which the side chain hydroxyl group of the serine supplies its oxygen atom to form the C-terminus of the beta chain, while the remainder of the serine residue undergoes an oxidative deamination to produce ammonia and the pyruvoyl prosthetic group on the alpha chain. During this reaction, the Ser that is part of the protease active site of the proenzyme becomes the pyruvoyl prosthetic group, which constitutes an essential element of the active site of the mature decarboxylase.

Its subcellular location is the cell membrane. The enzyme catalyses a 1,2-diacyl-sn-glycero-3-phospho-L-serine + H(+) = a 1,2-diacyl-sn-glycero-3-phosphoethanolamine + CO2. It participates in phospholipid metabolism; phosphatidylethanolamine biosynthesis; phosphatidylethanolamine from CDP-diacylglycerol: step 2/2. In terms of biological role, catalyzes the formation of phosphatidylethanolamine (PtdEtn) from phosphatidylserine (PtdSer). The polypeptide is Phosphatidylserine decarboxylase proenzyme (Wigglesworthia glossinidia brevipalpis).